We begin with the raw amino-acid sequence, 447 residues long: Ribosomal protein uS12 methylthiotransferase RimO (447 aa).

In terms of domain architecture, MTTase N-terminal spans 4–114 (PKVGFVSLGC…VMEAVHEYVP (111 aa)). Positions 13, 49, 78, 147, 151, and 154 each coordinate [4Fe-4S] cluster. The Radical SAM core domain occupies 133–370 (LTPKHYAYLK…MQVQQEISAA (238 aa)). Positions 373-443 (QKRIGQTMTV…EYDLFAKLIQ (71 aa)) constitute a TRAM domain.

Belongs to the methylthiotransferase family. RimO subfamily. Requires [4Fe-4S] cluster as cofactor.

Its subcellular location is the cytoplasm. The enzyme catalyses L-aspartate(89)-[ribosomal protein uS12]-hydrogen + (sulfur carrier)-SH + AH2 + 2 S-adenosyl-L-methionine = 3-methylsulfanyl-L-aspartate(89)-[ribosomal protein uS12]-hydrogen + (sulfur carrier)-H + 5'-deoxyadenosine + L-methionine + A + S-adenosyl-L-homocysteine + 2 H(+). Catalyzes the methylthiolation of an aspartic acid residue of ribosomal protein uS12. In Acinetobacter baylyi (strain ATCC 33305 / BD413 / ADP1), this protein is Ribosomal protein uS12 methylthiotransferase RimO.